Consider the following 863-residue polypeptide: Glycogen phosphorylase (863 aa).

Lysine 618 is modified (N6-(pyridoxal phosphate)lysine).

It belongs to the glycogen phosphorylase family. It depends on pyridoxal 5'-phosphate as a cofactor.

It catalyses the reaction [(1-&gt;4)-alpha-D-glucosyl](n) + phosphate = [(1-&gt;4)-alpha-D-glucosyl](n-1) + alpha-D-glucose 1-phosphate. Phosphorylase is an important allosteric enzyme in carbohydrate metabolism. Enzymes from different sources differ in their regulatory mechanisms and in their natural substrates. However, all known phosphorylases share catalytic and structural properties. This is Glycogen phosphorylase (glgP) from Mycobacterium tuberculosis (strain ATCC 25618 / H37Rv).